A 622-amino-acid polypeptide reads, in one-letter code: Chaperone protein HscA homolog (622 aa).

Belongs to the heat shock protein 70 family.

In terms of biological role, chaperone involved in the maturation of iron-sulfur cluster-containing proteins. Has a low intrinsic ATPase activity which is markedly stimulated by HscB. This Burkholderia cenocepacia (strain ATCC BAA-245 / DSM 16553 / LMG 16656 / NCTC 13227 / J2315 / CF5610) (Burkholderia cepacia (strain J2315)) protein is Chaperone protein HscA homolog.